The following is a 227-amino-acid chain: Probable N-acetyltransferase family 8 member 5 (227 aa).

The next 3 membrane-spanning stretches (helical) occupy residues 29–49, 53–73, and 201–221; these read IPAA…LFVM, IVLV…LLLL, and ISII…SFPS. The N-acetyltransferase domain maps to 69-213; it reads FLLLLLRLLA…IKWLITFSII (145 aa).

Belongs to the camello family.

The protein localises to the membrane. May play a role in regulation of gastrulation. This Mus musculus (Mouse) protein is Probable N-acetyltransferase family 8 member 5.